Here is a 126-residue protein sequence, read N- to C-terminus: Fluoride-specific ion channel FluC (126 aa).

Transmembrane regions (helical) follow at residues 6–26 (VLLV…VALA), 32–52 (TGFP…IGFI), 68–90 (LLLT…ETGG), and 102–122 (LYVA…TLLA). Positions 76 and 79 each coordinate Na(+).

This sequence belongs to the fluoride channel Fluc/FEX (TC 1.A.43) family.

The protein localises to the cell inner membrane. It catalyses the reaction fluoride(in) = fluoride(out). Na(+) is not transported, but it plays an essential structural role and its presence is essential for fluoride channel function. Its function is as follows. Fluoride-specific ion channel. Important for reducing fluoride concentration in the cell, thus reducing its toxicity. The chain is Fluoride-specific ion channel FluC from Chlorobaculum tepidum (strain ATCC 49652 / DSM 12025 / NBRC 103806 / TLS) (Chlorobium tepidum).